The following is a 112-amino-acid chain: Gonad-inhibiting hormone (112 aa).

Residues 1-31 form the signal peptide; sequence MVTRVGSGFSVQRVWLLLVIVVVLCGSVTQQ. 3 disulfides stabilise this stretch: cysteine 41/cysteine 78, cysteine 58/cysteine 74, and cysteine 61/cysteine 87. Position 109 is an alanine amide (alanine 109).

As to expression, produced in the eyestalk X-organ sinus gland complex of male and female lobsters.

It localises to the secreted. In terms of biological role, inhibits vitellogenesis in female animals. Plays a prominent role in the regulation of reproduction/molting processes. The polypeptide is Gonad-inhibiting hormone (Homarus americanus (American lobster)).